A 1091-amino-acid polypeptide reads, in one-letter code: ATP-dependent helicase/deoxyribonuclease subunit B (1091 aa).

The protein belongs to the helicase family. AddB/RexB type 2 subfamily. Heterodimer of AddA and RexB. The cofactor is Mg(2+).

Its function is as follows. The heterodimer acts as both an ATP-dependent DNA helicase and an ATP-dependent, dual-direction single-stranded exonuclease. Recognizes the chi site generating a DNA molecule suitable for the initiation of homologous recombination. This subunit has 5' -&gt; 3' nuclease activity but not helicase activity. The polypeptide is ATP-dependent helicase/deoxyribonuclease subunit B (Streptococcus pneumoniae (strain ATCC 700669 / Spain 23F-1)).